A 714-amino-acid polypeptide reads, in one-letter code: Fumarate reductase flavoprotein subunit (714 aa).

FAD contacts are provided by residues Gly-13–Ala-16, Ser-42–Ser-44, and Gly-49–Gly-50. His-43 carries the post-translational modification Tele-8alpha-FAD histidine. Active-site residues include His-257 and Arg-273. Residues Glu-420 and Ser-436 to Val-437 contribute to the FAD site.

It belongs to the FAD-dependent oxidoreductase 2 family. FRD/SDH subfamily. In terms of assembly, part of an enzyme complex containing three subunits: a flavoprotein (frdA), an iron-sulfur protein (frdB), and diheme cytochrome b (frdC). FAD is required as a cofactor.

It localises to the cell inner membrane. It catalyses the reaction a quinone + succinate = fumarate + a quinol. The fumarate reductase enzyme complex is required for fumarate respiration. This Helicobacter pylori (strain J99 / ATCC 700824) (Campylobacter pylori J99) protein is Fumarate reductase flavoprotein subunit (frdA).